An 813-amino-acid polypeptide reads, in one-letter code: Enhancer of polycomb homolog 1 (813 aa).

Disordered stretches follow at residues F310 to F403, M484 to L513, and F528 to S577. Positions K311–R333 are enriched in basic and acidic residues. A Glycyl lysine isopeptide (Lys-Gly) (interchain with G-Cter in SUMO2) cross-link involves residue K319. The span at P346–P361 shows a compositional bias: low complexity. Polar residues predominate over residues S486–L513. S538 is subject to Phosphoserine. Over residues T564–S577 the composition is skewed to low complexity. K650 is covalently cross-linked (Glycyl lysine isopeptide (Lys-Gly) (interchain with G-Cter in SUMO2)). A disordered region spans residues V779–T813. The segment covering V788 to K797 has biased composition (basic and acidic residues).

This sequence belongs to the enhancer of polycomb family. In terms of assembly, component of the NuA4 histone acetyltransferase complex which contains the catalytic subunit KAT5/TIP60 and the subunits EP400, TRRAP/PAF400, BRD8/SMAP, EPC1, DMAP1/DNMAP1, RUVBL1/TIP49, RUVBL2, ING3, actin, ACTL6A/BAF53A, MORF4L1/MRG15, MORF4L2/MRGX, MRGBP, YEATS4/GAS41, VPS72/YL1 and MEAF6. KAT5/TIP60, EPC1, and ING3 together constitute a minimal HAT complex termed Piccolo NuA4. Component of a NuA4-related complex which contains EP400, TRRAP/PAF400, SRCAP, BRD8/SMAP, EPC1, DMAP1/DNMAP1, RUVBL1/TIP49, RUVBL2, actin, ACTL6A/BAF53A, VPS72 and YEATS4/GAS41. Interacts with TRIM27. Interacts with MBTD1; interaction is direct and promotes recruitment of MBTD1 into the NuA4 histone acetyltransferase complex. Expressed in adult brain, heart, kidney, liver, lung, skeletal muscle and testis. Expressed in male germ cells, present in round spermatids of steps 1 to 4.

It localises to the nucleus. Its subcellular location is the cytoplasm. In terms of biological role, component of the NuA4 histone acetyltransferase (HAT) complex, a multiprotein complex involved in transcriptional activation of select genes principally by acetylation of nucleosomal histones H4 and H2A. The NuA4 complex plays a direct role in repair of DNA double-strand breaks (DSBs) by promoting homologous recombination (HR). The NuA4 complex is also required for spermatid development by promoting acetylation of histones: histone acetylation is required for histone replacement during the transition from round to elongating spermatids. In the NuA4 complex, EPC1 is required to recruit MBTD1 into the complex. The sequence is that of Enhancer of polycomb homolog 1 from Mus musculus (Mouse).